Consider the following 135-residue polypeptide: Small ribosomal subunit protein uS12 (135 aa).

Residue aspartate 89 is modified to 3-methylthioaspartic acid. The tract at residues 101–135 is disordered; sequence SLDTSGVADRKQSRSKYGAKQPKAGAAAPVKGKRR. Low complexity predominate over residues 116–135; that stretch reads KYGAKQPKAGAAAPVKGKRR.

The protein belongs to the universal ribosomal protein uS12 family. In terms of assembly, part of the 30S ribosomal subunit. Contacts proteins S8 and S17. May interact with IF1 in the 30S initiation complex.

In terms of biological role, with S4 and S5 plays an important role in translational accuracy. Functionally, interacts with and stabilizes bases of the 16S rRNA that are involved in tRNA selection in the A site and with the mRNA backbone. Located at the interface of the 30S and 50S subunits, it traverses the body of the 30S subunit contacting proteins on the other side and probably holding the rRNA structure together. The combined cluster of proteins S8, S12 and S17 appears to hold together the shoulder and platform of the 30S subunit. The protein is Small ribosomal subunit protein uS12 of Chlorobium phaeobacteroides (strain DSM 266 / SMG 266 / 2430).